We begin with the raw amino-acid sequence, 77 residues long: Metallothionein-like protein 2 (77 aa).

Belongs to the metallothionein superfamily. Type 15 family.

Metallothioneins have a high content of cysteine residues that bind various heavy metals. The protein is Metallothionein-like protein 2 (MT1A) of Trifolium repens (Creeping white clover).